We begin with the raw amino-acid sequence, 234 residues long: MIELWPAIDLIGSTSVRLTEGKYDSEEKMSRSAEESIAYYSQFECVNRIHIVDLIGAKAQHAREFDYIKSLRRLTTKDIEVGGGIRTKSQIMDYFAAGINYCIVGTKGIQDTDWLKEMAHTFPGRIYLSVDAYGEDIKVNGWEEDTELNLFSFVRRLSDIPLGGIIYTDIAKDGKMSGPNFELTGQLVKATTIPVIASGGIRHQQDIQRLASLNVHAAIIGKAAHQASFWEGLK.

The active-site Proton acceptor is the D9. The active-site Proton donor is D131.

Belongs to the HisA/HisF family.

The protein resides in the cytoplasm. It carries out the reaction 1-(5-phospho-beta-D-ribosyl)-5-[(5-phospho-beta-D-ribosylamino)methylideneamino]imidazole-4-carboxamide = 5-[(5-phospho-1-deoxy-D-ribulos-1-ylimino)methylamino]-1-(5-phospho-beta-D-ribosyl)imidazole-4-carboxamide. Its pathway is amino-acid biosynthesis; L-histidine biosynthesis; L-histidine from 5-phospho-alpha-D-ribose 1-diphosphate: step 4/9. The chain is 1-(5-phosphoribosyl)-5-[(5-phosphoribosylamino)methylideneamino] imidazole-4-carboxamide isomerase from Staphylococcus aureus (strain NCTC 8325 / PS 47).